We begin with the raw amino-acid sequence, 99 residues long: Probable non-specific lipid-transfer protein AKCS9 (99 aa).

The first 33 residues, 1 to 33 (MTMKMKMKMSVVCAVVVVALFLIDVGPVAEAVT), serve as a signal peptide directing secretion. Intrachain disulfides connect Cys34–Cys68, Cys42–Cys56, Cys57–Cys92, and Cys66–Cys99.

Belongs to the plant LTP family. In terms of tissue distribution, expressed in most tissues except nodules.

In terms of biological role, potential lipid transfer protein. The sequence is that of Probable non-specific lipid-transfer protein AKCS9 from Vigna unguiculata (Cowpea).